The sequence spans 87 residues: Putative RNase MJ1548 (87 aa).

Catalysis depends on residues Arg65 and His70. Residues 65–72 carry the RX(4)HXY motif motif; sequence RNAIVHKY. Tyr72 carries the post-translational modification O-di-AMP-tyrosine.

The protein belongs to the HepT RNase toxin family. Homodimer, probably forms a complex with cognate antitoxin MJ1547. Post-translationally, modified by cognate antitoxin MJ1547; probably at least 2 successive AMPylation events occur on Tyr-72.

Probable toxic component of a putative type VII toxin-antitoxin (TA) system, probably an RNase. Probably neutralized by cognate antitoxin MJ1547. Neutralization may be due to AMPylation by antitoxin MJ1547. This Methanocaldococcus jannaschii (strain ATCC 43067 / DSM 2661 / JAL-1 / JCM 10045 / NBRC 100440) (Methanococcus jannaschii) protein is Putative RNase MJ1548.